A 525-amino-acid polypeptide reads, in one-letter code: Bifunctional purine biosynthesis protein PurH (525 aa).

The region spanning 1–147 (MTKIERALIS…KNWAHVAIVT (147 aa)) is the MGS-like domain.

The protein belongs to the PurH family.

The enzyme catalyses (6R)-10-formyltetrahydrofolate + 5-amino-1-(5-phospho-beta-D-ribosyl)imidazole-4-carboxamide = 5-formamido-1-(5-phospho-D-ribosyl)imidazole-4-carboxamide + (6S)-5,6,7,8-tetrahydrofolate. It catalyses the reaction IMP + H2O = 5-formamido-1-(5-phospho-D-ribosyl)imidazole-4-carboxamide. Its pathway is purine metabolism; IMP biosynthesis via de novo pathway; 5-formamido-1-(5-phospho-D-ribosyl)imidazole-4-carboxamide from 5-amino-1-(5-phospho-D-ribosyl)imidazole-4-carboxamide (10-formyl THF route): step 1/1. It functions in the pathway purine metabolism; IMP biosynthesis via de novo pathway; IMP from 5-formamido-1-(5-phospho-D-ribosyl)imidazole-4-carboxamide: step 1/1. The polypeptide is Bifunctional purine biosynthesis protein PurH (Chromobacterium violaceum (strain ATCC 12472 / DSM 30191 / JCM 1249 / CCUG 213 / NBRC 12614 / NCIMB 9131 / NCTC 9757 / MK)).